Here is a 766-residue protein sequence, read N- to C-terminus: 5-methyltetrahydropteroyltriglutamate--homocysteine methyltransferase (766 aa).

5-methyltetrahydropteroyltri-L-glutamate contacts are provided by residues 16 to 19 and Lys122; that span reads RELK. Residues 443-445 and Glu496 contribute to the L-homocysteine site; that span reads IGS. L-methionine-binding positions include 443-445 and Glu496; that span reads IGS. 5-methyltetrahydropteroyltri-L-glutamate contacts are provided by residues 527 to 528 and Trp573; that span reads RC. Asp611 is an L-homocysteine binding site. An L-methionine-binding site is contributed by Asp611. Glu617 contributes to the 5-methyltetrahydropteroyltri-L-glutamate binding site. Zn(2+) contacts are provided by His653, Cys655, and Glu677. His706 acts as the Proton donor in catalysis. Cys738 contributes to the Zn(2+) binding site.

This sequence belongs to the vitamin-B12 independent methionine synthase family. It depends on Zn(2+) as a cofactor.

The enzyme catalyses 5-methyltetrahydropteroyltri-L-glutamate + L-homocysteine = tetrahydropteroyltri-L-glutamate + L-methionine. The protein operates within amino-acid biosynthesis; L-methionine biosynthesis via de novo pathway; L-methionine from L-homocysteine (MetE route): step 1/1. In terms of biological role, catalyzes the transfer of a methyl group from 5-methyltetrahydrofolate to homocysteine resulting in methionine formation. In Pseudomonas putida (strain W619), this protein is 5-methyltetrahydropteroyltriglutamate--homocysteine methyltransferase.